The primary structure comprises 304 residues: N-acetylmuramic acid 6-phosphate etherase (304 aa).

Residues 58–221 (IVDRMKQGGR…TTASMVKMGK (164 aa)) form the SIS domain. The active-site Proton donor is the glutamate 86. Glutamate 117 is a catalytic residue.

The protein belongs to the GCKR-like family. MurNAc-6-P etherase subfamily. As to quaternary structure, homodimer.

It catalyses the reaction N-acetyl-D-muramate 6-phosphate + H2O = N-acetyl-D-glucosamine 6-phosphate + (R)-lactate. It functions in the pathway amino-sugar metabolism; N-acetylmuramate degradation. Specifically catalyzes the cleavage of the D-lactyl ether substituent of MurNAc 6-phosphate, producing GlcNAc 6-phosphate and D-lactate. This is N-acetylmuramic acid 6-phosphate etherase from Clostridioides difficile (strain 630) (Peptoclostridium difficile).